Reading from the N-terminus, the 1378-residue chain is DNA-directed RNA polymerase subunit beta (1378 aa).

The protein belongs to the RNA polymerase beta chain family. As to quaternary structure, the RNAP catalytic core consists of 2 alpha, 1 beta, 1 beta' and 1 omega subunit. When a sigma factor is associated with the core the holoenzyme is formed, which can initiate transcription.

It carries out the reaction RNA(n) + a ribonucleoside 5'-triphosphate = RNA(n+1) + diphosphate. In terms of biological role, DNA-dependent RNA polymerase catalyzes the transcription of DNA into RNA using the four ribonucleoside triphosphates as substrates. The polypeptide is DNA-directed RNA polymerase subunit beta (Agrobacterium fabrum (strain C58 / ATCC 33970) (Agrobacterium tumefaciens (strain C58))).